Reading from the N-terminus, the 505-residue chain is L-carnitine/gamma-butyrobetaine antiporter (505 aa).

Transmembrane regions (helical) follow at residues 10 to 30, 51 to 71, 92 to 112, 143 to 163, 195 to 215, 231 to 251, 263 to 283, 316 to 336, 347 to 367, 403 to 423, 446 to 466, and 475 to 495; these read IEPK…WLTV, WGWA…WLVF, IFMM…SIEI, GPLP…FFFV, FYLV…TPLV, LDAI…ACGL, SYLS…SFIM, WTVF…IFLA, LCFG…TVLG, LSTA…VTLI, LLVR…LLAL, and AIIA…LSFI.

It belongs to the BCCT transporter (TC 2.A.15) family. CaiT subfamily. As to quaternary structure, homotrimer.

It localises to the cell inner membrane. The catalysed reaction is 4-(trimethylamino)butanoate(in) + (R)-carnitine(out) = 4-(trimethylamino)butanoate(out) + (R)-carnitine(in). It functions in the pathway amine and polyamine metabolism; carnitine metabolism. In terms of biological role, catalyzes the exchange of L-carnitine for gamma-butyrobetaine. This chain is L-carnitine/gamma-butyrobetaine antiporter, found in Salmonella choleraesuis (strain SC-B67).